The primary structure comprises 377 residues: Chaperone protein DnaJ (377 aa).

Residues 6–70 (DYYKILGIDK…EKKAIYDKYG (65 aa)) enclose the J domain. The segment at 143 to 225 (GRVISQKLDK…CKGAKKIKES (83 aa)) adopts a CR-type zinc-finger fold. Zn(2+) contacts are provided by Cys156, Cys159, Cys173, Cys176, Cys199, Cys202, Cys213, and Cys216. CXXCXGXG motif repeat units follow at residues 156–163 (CESCNGTG), 173–180 (CSTCNGRG), 199–206 (CSTCNGLG), and 213–220 (CPSCKGAK).

The protein belongs to the DnaJ family. As to quaternary structure, homodimer. It depends on Zn(2+) as a cofactor.

It localises to the cytoplasm. Participates actively in the response to hyperosmotic and heat shock by preventing the aggregation of stress-denatured proteins and by disaggregating proteins, also in an autonomous, DnaK-independent fashion. Unfolded proteins bind initially to DnaJ; upon interaction with the DnaJ-bound protein, DnaK hydrolyzes its bound ATP, resulting in the formation of a stable complex. GrpE releases ADP from DnaK; ATP binding to DnaK triggers the release of the substrate protein, thus completing the reaction cycle. Several rounds of ATP-dependent interactions between DnaJ, DnaK and GrpE are required for fully efficient folding. Also involved, together with DnaK and GrpE, in the DNA replication of plasmids through activation of initiation proteins. The sequence is that of Chaperone protein DnaJ from Mycoplasmopsis pulmonis (strain UAB CTIP) (Mycoplasma pulmonis).